A 274-amino-acid polypeptide reads, in one-letter code: MGTDSRAAGALLARASTLHLQTGNLLNWGRLRKKCPSTHSEELRDCIQKTLNEWSSQISPDLIREFPDVLECTVSHAVEKINPDEREEMKVSAKLFIVGSNSSSSTRNAVDMACSVLGVAQLDSVIIASPPVEDGVNLSLEHLQPYWEELQNLVQSKKIVAIGTSDLDKTQLEQLYQWAQVKPNSNQVNLASCCVMPPDLTAFAKQFDIQLLTHNDPKELLSEASFQEALQESIPDIRAHEWVPLWLLRYSVIVKSRGIIKSKGYILQAKRKGS.

Serine 59 carries the phosphoserine modification. Position 263 is an N6-acetyllysine (lysine 263).

It belongs to the aldo/keto reductase family. Glutamate--cysteine ligase light chain subfamily. As to quaternary structure, heterodimer of a catalytic heavy chain and a regulatory light chain.

Its pathway is sulfur metabolism; glutathione biosynthesis; glutathione from L-cysteine and L-glutamate: step 1/2. This chain is Glutamate--cysteine ligase regulatory subunit (GCLM), found in Bos taurus (Bovine).